Here is a 102-residue protein sequence, read N- to C-terminus: Large ribosomal subunit protein bL21 (102 aa).

Residues 77–88 (KPKKHTHTKQGH) are compositionally biased toward basic residues. Residues 77 to 102 (KPKKHTHTKQGHRQPYTKVTINKINA) are disordered. Residues 93–102 (TKVTINKINA) are compositionally biased toward polar residues.

The protein belongs to the bacterial ribosomal protein bL21 family. As to quaternary structure, part of the 50S ribosomal subunit. Contacts protein L20.

In terms of biological role, this protein binds to 23S rRNA in the presence of protein L20. This Limosilactobacillus reuteri (strain DSM 20016) (Lactobacillus reuteri) protein is Large ribosomal subunit protein bL21.